We begin with the raw amino-acid sequence, 431 residues long: Enolase (431 aa).

Q166 serves as a coordination point for (2R)-2-phosphoglycerate. E208 (proton donor) is an active-site residue. Residues D245, E288, and D315 each coordinate Mg(2+). Residues K340, R369, S370, and K391 each coordinate (2R)-2-phosphoglycerate. The active-site Proton acceptor is K340.

It belongs to the enolase family. The cofactor is Mg(2+).

It localises to the cytoplasm. Its subcellular location is the secreted. The protein localises to the cell surface. The catalysed reaction is (2R)-2-phosphoglycerate = phosphoenolpyruvate + H2O. Its pathway is carbohydrate degradation; glycolysis; pyruvate from D-glyceraldehyde 3-phosphate: step 4/5. Catalyzes the reversible conversion of 2-phosphoglycerate (2-PG) into phosphoenolpyruvate (PEP). It is essential for the degradation of carbohydrates via glycolysis. The chain is Enolase from Clostridium perfringens (strain ATCC 13124 / DSM 756 / JCM 1290 / NCIMB 6125 / NCTC 8237 / Type A).